Reading from the N-terminus, the 177-residue chain is Ribosome maturation factor RimP (177 aa).

The protein belongs to the RimP family.

It is found in the cytoplasm. In terms of biological role, required for maturation of 30S ribosomal subunits. The protein is Ribosome maturation factor RimP of Streptococcus sanguinis (strain SK36).